We begin with the raw amino-acid sequence, 611 residues long: Probable Xaa-Pro aminopeptidase P (611 aa).

The Mn(2+) site is built by aspartate 408, aspartate 419, glutamate 517, and glutamate 531.

It belongs to the peptidase M24B family. The cofactor is Mn(2+).

The catalysed reaction is Release of any N-terminal amino acid, including proline, that is linked to proline, even from a dipeptide or tripeptide.. In terms of biological role, catalyzes the removal of a penultimate prolyl residue from the N-termini of peptides. The chain is Probable Xaa-Pro aminopeptidase P (AMPP) from Coccidioides posadasii (strain RMSCC 757 / Silveira) (Valley fever fungus).